The sequence spans 170 residues: Crossover junction endodeoxyribonuclease RuvC (170 aa).

Active-site residues include D11, E71, and D143. Mg(2+)-binding residues include D11, E71, and D143.

It belongs to the RuvC family. In terms of assembly, homodimer which binds Holliday junction (HJ) DNA. The HJ becomes 2-fold symmetrical on binding to RuvC with unstacked arms; it has a different conformation from HJ DNA in complex with RuvA. In the full resolvosome a probable DNA-RuvA(4)-RuvB(12)-RuvC(2) complex forms which resolves the HJ. Mg(2+) serves as cofactor.

The protein resides in the cytoplasm. The catalysed reaction is Endonucleolytic cleavage at a junction such as a reciprocal single-stranded crossover between two homologous DNA duplexes (Holliday junction).. Its function is as follows. The RuvA-RuvB-RuvC complex processes Holliday junction (HJ) DNA during genetic recombination and DNA repair. Endonuclease that resolves HJ intermediates. Cleaves cruciform DNA by making single-stranded nicks across the HJ at symmetrical positions within the homologous arms, yielding a 5'-phosphate and a 3'-hydroxyl group; requires a central core of homology in the junction. The consensus cleavage sequence is 5'-(A/T)TT(C/G)-3'. Cleavage occurs on the 3'-side of the TT dinucleotide at the point of strand exchange. HJ branch migration catalyzed by RuvA-RuvB allows RuvC to scan DNA until it finds its consensus sequence, where it cleaves and resolves the cruciform DNA. This Rhizobium meliloti (strain 1021) (Ensifer meliloti) protein is Crossover junction endodeoxyribonuclease RuvC.